We begin with the raw amino-acid sequence, 167 residues long: Transcriptional regulator MraZ (167 aa).

SpoVT-AbrB domains follow at residues 8-51 and 92-135; these read ESNH…YGDH and SFPT…NPAT.

The protein belongs to the MraZ family. As to quaternary structure, forms oligomers.

The protein localises to the cytoplasm. Its subcellular location is the nucleoid. This chain is Transcriptional regulator MraZ, found in Ruegeria pomeroyi (strain ATCC 700808 / DSM 15171 / DSS-3) (Silicibacter pomeroyi).